A 323-amino-acid chain; its full sequence is Delta(7)-sterol 5(6)-desaturase ERG3B (323 aa).

Transmembrane regions (helical) follow at residues 67–87 (ASIL…SAAL), 112–132 (IQSS…FFLG), and 150–170 (SWLA…IYWI). The 129-residue stretch at 157–285 (ILYMVFNDLG…YFTWADNYWG (129 aa)) folds into the Fatty acid hydroxylase domain. The short motif at 171–175 (HRLEH) is the Histidine box-1 element. The Histidine box-2 motif lies at 184-188 (HKPHH). The Histidine box-3 motif lies at 262 to 266 (HTLHH).

The protein belongs to the sterol desaturase family.

It is found in the endoplasmic reticulum membrane. It catalyses the reaction episterol + 2 Fe(II)-[cytochrome b5] + O2 + 2 H(+) = 5-dehydroepisterol + 2 Fe(III)-[cytochrome b5] + 2 H2O. It functions in the pathway steroid metabolism; ergosterol biosynthesis. C-5 sterol desaturase; part of the third module of ergosterol biosynthesis pathway that includes the late steps of the pathway. ERG3A and ERG3BB catalyze the introduction of a C-5 double bond in the B ring to produce 5-dehydroepisterol. The third module or late pathway involves the ergosterol synthesis itself through consecutive reactions that mainly occur in the endoplasmic reticulum (ER) membrane. Firstly, the squalene synthase ERG9 catalyzes the condensation of 2 farnesyl pyrophosphate moieties to form squalene, which is the precursor of all steroids. Squalene synthase is crucial for balancing the incorporation of farnesyl diphosphate (FPP) into sterol and nonsterol isoprene synthesis. Secondly, squalene is converted into lanosterol by the consecutive action of the squalene epoxidase ERG1 and the lanosterol synthase ERG7. Then, the delta(24)-sterol C-methyltransferase ERG6 methylates lanosterol at C-24 to produce eburicol. Eburicol is the substrate of the sterol 14-alpha demethylase encoded by CYP51A, CYP51B and CYP51C, to yield 4,4,24-trimethyl ergosta-8,14,24(28)-trienol. CYP51B encodes the enzyme primarily responsible for sterol 14-alpha-demethylation, and plays an essential role in ascospore formation. CYP51A encodes an additional sterol 14-alpha-demethylase, induced on ergosterol depletion and responsible for the intrinsic variation in azole sensitivity. The third CYP51 isoform, CYP51C, does not encode a sterol 14-alpha-demethylase, but is required for full virulence on host wheat ears. The C-14 reductase ERG24 then reduces the C14=C15 double bond which leads to 4,4-dimethylfecosterol. A sequence of further demethylations at C-4, involving the C-4 demethylation complex containing the C-4 methylsterol oxidases ERG25, the sterol-4-alpha-carboxylate 3-dehydrogenase ERG26 and the 3-keto-steroid reductase ERG27, leads to the production of fecosterol via 4-methylfecosterol. ERG28 has a role as a scaffold to help anchor ERG25, ERG26 and ERG27 to the endoplasmic reticulum. The C-8 sterol isomerase ERG2 then catalyzes the reaction which results in unsaturation at C-7 in the B ring of sterols and thus converts fecosterol to episterol. The sterol-C5-desaturases ERG3A and ERG3BB then catalyze the introduction of a C-5 double bond in the B ring to produce 5-dehydroepisterol. The C-22 sterol desaturases ERG5A and ERG5B further convert 5-dehydroepisterol into ergosta-5,7,22,24(28)-tetraen-3beta-ol by forming the C-22(23) double bond in the sterol side chain. Finally, ergosta-5,7,22,24(28)-tetraen-3beta-ol is substrate of the C-24(28) sterol reductase ERG4 to produce ergosterol. This is Delta(7)-sterol 5(6)-desaturase ERG3B from Gibberella zeae (strain ATCC MYA-4620 / CBS 123657 / FGSC 9075 / NRRL 31084 / PH-1) (Wheat head blight fungus).